Consider the following 883-residue polypeptide: Puromycin-sensitive aminopeptidase (883 aa).

Residues Glu125 and Gly265 to Asn269 each bind substrate. His301 provides a ligand contact to Zn(2+). The active-site Proton acceptor is the Glu302. Positions 305 and 324 each coordinate Zn(2+).

The protein belongs to the peptidase M1 family. Zn(2+) serves as cofactor.

It catalyses the reaction Release of an N-terminal amino acid, preferentially alanine, from a wide range of peptides, amides and arylamides.. With respect to regulation, strongly inhibited by puromycin and DAMPAQ-22. In terms of biological role, aminopeptidase with broad substrate specificity for several peptides. Involved in proteolytic events essential for cell growth and viability. Plays an essential role during prophase I of meiosis. Required for correct meiotic reconbination in both male and female gametophytes. This Arabidopsis thaliana (Mouse-ear cress) protein is Puromycin-sensitive aminopeptidase (MPA1).